The chain runs to 265 residues: Insulin-like growth factor-binding protein 2-B (265 aa).

The signal sequence occupies residues 1 to 17; sequence MSLALLCSLLLVHGSLG. The IGFBP N-terminal domain maps to 19-99; that stretch reads IVFRCPSCTA…IQGLGRCENK (81 aa). Intrachain disulfides connect cysteine 23/cysteine 49, cysteine 26/cysteine 51, cysteine 34/cysteine 52, cysteine 41/cysteine 55, cysteine 63/cysteine 76, and cysteine 70/cysteine 96. Residues 107-122 show a composition bias toward polar residues; it reads TNQESAAHSGEVNGTR. Disordered regions lie at residues 107 to 128 and 144 to 170; these read TNQE…PMKK and HHNN…SQCQ. Residues 166–248 enclose the Thyroglobulin type-1 domain; that stretch reads QSQCQQELDK…SDKVRGDPNC (83 aa). 3 cysteine pairs are disulfide-bonded: cysteine 169–cysteine 203, cysteine 214–cysteine 225, and cysteine 227–cysteine 248. A disordered region spans residues 238-265; the sequence is SSDKVRGDPNCSQYYGGPELEPPTAQQK. Residues 243-245 carry the Cell attachment site motif; the sequence is RGD.

As to quaternary structure, interacts with igf2. Interacts with igf1. In early embryos, expressed at a low level in most tissues with expression becoming abundant in the liver by 96 hours post-fertilization (hpf). The expression pattern in adults exhibits sexual dimorphism; in adult males expression is limited exclusively to the liver whereas in adult females expression is observed in the liver and other tissues including the gut, kidney, ovary and muscle.

It localises to the secreted. Its function is as follows. IGF-binding proteins prolong the half-life of the IGFs and have been shown to either inhibit or stimulate the growth promoting effects of the IGFs on cell culture. They alter the interaction of IGFs with their cell surface receptors. The protein is Insulin-like growth factor-binding protein 2-B of Danio rerio (Zebrafish).